The chain runs to 297 residues: 4-hydroxy-tetrahydrodipicolinate synthase (297 aa).

Position 46 (Thr-46) interacts with pyruvate. Tyr-134 serves as the catalytic Proton donor/acceptor. Lys-163 (schiff-base intermediate with substrate) is an active-site residue. Residue Ile-205 participates in pyruvate binding.

Belongs to the DapA family. As to quaternary structure, homotetramer; dimer of dimers.

It localises to the cytoplasm. It catalyses the reaction L-aspartate 4-semialdehyde + pyruvate = (2S,4S)-4-hydroxy-2,3,4,5-tetrahydrodipicolinate + H2O + H(+). It participates in amino-acid biosynthesis; L-lysine biosynthesis via DAP pathway; (S)-tetrahydrodipicolinate from L-aspartate: step 3/4. Catalyzes the condensation of (S)-aspartate-beta-semialdehyde [(S)-ASA] and pyruvate to 4-hydroxy-tetrahydrodipicolinate (HTPA). In Thermoanaerobacter pseudethanolicus (strain ATCC 33223 / 39E) (Clostridium thermohydrosulfuricum), this protein is 4-hydroxy-tetrahydrodipicolinate synthase.